The following is a 476-amino-acid chain: NAC domain-containing protein 86 (476 aa).

An NAC domain is found at 6 to 157 (LPPGFRFHPT…AYALCRVFKK (152 aa)). Residues 105 to 163 (IGTKKTLVYYRGRAPHGIRTGWVMHEYRLDESECEPSAFGMQDAYALCRVFKKIVIEAK) mediate DNA binding.

Expressed in a few sieve element cells before enucleation and in phloem-pole pericycle cells.

The protein localises to the nucleus. Transcription factor directing sieve element enucleation and cytosol degradation. Not required for formation of lytic vacuoles. Regulates, with NAC045, the transcription of NEN1, NEN2, NEN3, NEN4, RTM1, RTM2, UBP16, PLDZETA, ABCB10 and At1g26450. The chain is NAC domain-containing protein 86 from Arabidopsis thaliana (Mouse-ear cress).